We begin with the raw amino-acid sequence, 197 residues long: Inner membrane-spanning protein YciB (197 aa).

A run of 5 helical transmembrane segments spans residues 36-56 (IYSA…ALFL), 64-84 (GQWL…TFHS), 90-110 (WKAP…HFIG), 135-155 (LAWI…AFTF), and 162-182 (FKVF…GVYL).

The protein belongs to the YciB family.

The protein resides in the cell inner membrane. In terms of biological role, plays a role in cell envelope biogenesis, maintenance of cell envelope integrity and membrane homeostasis. The sequence is that of Inner membrane-spanning protein YciB from Pseudomonas putida (strain ATCC 700007 / DSM 6899 / JCM 31910 / BCRC 17059 / LMG 24140 / F1).